Consider the following 85-residue polypeptide: Small ribosomal subunit protein bS18c (85 aa).

This sequence belongs to the bacterial ribosomal protein bS18 family. Part of the 30S ribosomal subunit.

The protein localises to the plastid. It is found in the chloroplast. This Tupiella akineta (Green alga) protein is Small ribosomal subunit protein bS18c.